Reading from the N-terminus, the 448-residue chain is NADP-specific glutamate dehydrogenase (448 aa).

Substrate is bound by residues K88, Q109, and K112. Catalysis depends on K124, which acts as the Proton donor. G163 lines the substrate pocket. NADP(+)-binding residues include T207 and N238. A substrate-binding site is contributed by S375.

This sequence belongs to the Glu/Leu/Phe/Val dehydrogenases family. As to quaternary structure, homohexamer.

It catalyses the reaction L-glutamate + NADP(+) + H2O = 2-oxoglutarate + NH4(+) + NADPH + H(+). Catalyzes the reversible oxidative deamination of glutamate to alpha-ketoglutarate and ammonia. This is NADP-specific glutamate dehydrogenase (gdhA) from Psychrobacter sp. (strain TAD1).